We begin with the raw amino-acid sequence, 297 residues long: tRNA uridine(34) hydroxylase (297 aa).

The Rhodanese domain occupies 137–232 (RGDDVVFFDG…YGEKYGDKGL (96 aa)). Catalysis depends on Cys-192, which acts as the Cysteine persulfide intermediate.

It belongs to the TrhO family.

It carries out the reaction uridine(34) in tRNA + AH2 + O2 = 5-hydroxyuridine(34) in tRNA + A + H2O. Catalyzes oxygen-dependent 5-hydroxyuridine (ho5U) modification at position 34 in tRNAs. This Corynebacterium urealyticum (strain ATCC 43042 / DSM 7109) protein is tRNA uridine(34) hydroxylase.